The sequence spans 332 residues: Ferredoxin--NADP reductase 2 (332 aa).

FAD is bound by residues Glu-37, Gln-45, Tyr-50, Val-90, Phe-124, Asp-285, and Thr-326.

This sequence belongs to the ferredoxin--NADP reductase type 2 family. As to quaternary structure, homodimer. It depends on FAD as a cofactor.

The enzyme catalyses 2 reduced [2Fe-2S]-[ferredoxin] + NADP(+) + H(+) = 2 oxidized [2Fe-2S]-[ferredoxin] + NADPH. This is Ferredoxin--NADP reductase 2 from Bacillus licheniformis (strain ATCC 14580 / DSM 13 / JCM 2505 / CCUG 7422 / NBRC 12200 / NCIMB 9375 / NCTC 10341 / NRRL NRS-1264 / Gibson 46).